The sequence spans 158 residues: SsrA-binding protein (158 aa).

The protein belongs to the SmpB family.

It is found in the cytoplasm. Required for rescue of stalled ribosomes mediated by trans-translation. Binds to transfer-messenger RNA (tmRNA), required for stable association of tmRNA with ribosomes. tmRNA and SmpB together mimic tRNA shape, replacing the anticodon stem-loop with SmpB. tmRNA is encoded by the ssrA gene; the 2 termini fold to resemble tRNA(Ala) and it encodes a 'tag peptide', a short internal open reading frame. During trans-translation Ala-aminoacylated tmRNA acts like a tRNA, entering the A-site of stalled ribosomes, displacing the stalled mRNA. The ribosome then switches to translate the ORF on the tmRNA; the nascent peptide is terminated with the 'tag peptide' encoded by the tmRNA and targeted for degradation. The ribosome is freed to recommence translation, which seems to be the essential function of trans-translation. The polypeptide is SsrA-binding protein (Caldanaerobacter subterraneus subsp. tengcongensis (strain DSM 15242 / JCM 11007 / NBRC 100824 / MB4) (Thermoanaerobacter tengcongensis)).